The sequence spans 115 residues: Immunoglobulin kappa variable 5-2 (115 aa).

An N-terminal signal peptide occupies residues 1-20 (MGSQVHLLSFLLLWISDTRA). Positions 21-43 (ETTLTQSPAFMSATPGDKVNISC) are framework-1. An Ig-like domain is found at 22 to 115 (TTLTQSPAFM…YFCLQHDNFP (94 aa)). Asparagine 40 carries an N-linked (GlcNAc...) asparagine glycan. A Phosphoserine modification is found at serine 42. Cysteines 43 and 108 form a disulfide. Residues 44 to 54 (KASQDIDDDMN) are complementarity-determining-1. Residues 55-69 (WYQQKPGEAAIFIIQ) are framework-2. Residues 70 to 76 (EATTLVP) form a complementarity-determining-2 region. The tract at residues 77 to 108 (GIPPRFSGSGYGTDFTLTINNIESEDAAYYFC) is framework-3. The interval 109–115 (LQHDNFP) is complementarity-determining-3.

Immunoglobulins are composed of two identical heavy chains and two identical light chains; disulfide-linked.

Its subcellular location is the secreted. The protein localises to the cell membrane. Its function is as follows. V region of the variable domain of immunoglobulin light chains that participates in the antigen recognition. Immunoglobulins, also known as antibodies, are membrane-bound or secreted glycoproteins produced by B lymphocytes. In the recognition phase of humoral immunity, the membrane-bound immunoglobulins serve as receptors which, upon binding of a specific antigen, trigger the clonal expansion and differentiation of B lymphocytes into immunoglobulins-secreting plasma cells. Secreted immunoglobulins mediate the effector phase of humoral immunity, which results in the elimination of bound antigens. The antigen binding site is formed by the variable domain of one heavy chain, together with that of its associated light chain. Thus, each immunoglobulin has two antigen binding sites with remarkable affinity for a particular antigen. The variable domains are assembled by a process called V-(D)-J rearrangement and can then be subjected to somatic hypermutations which, after exposure to antigen and selection, allow affinity maturation for a particular antigen. This Homo sapiens (Human) protein is Immunoglobulin kappa variable 5-2.